The following is a 54-amino-acid chain: Lectin alpha chain (54 aa).

Belongs to the leguminous lectin family. As to quaternary structure, tetramer of two alpha and two beta chains.

The protein is Lectin alpha chain of Lathyrus odoratus (Sweet pea).